The chain runs to 755 residues: Zinc transporter ZIP6 (755 aa).

The N-terminal stretch at 1 to 28 (MARKLSVILILTFALSVTNPLHELKAAA) is a signal peptide. The Extracellular segment spans residues 29–325 (FPQTTEKISP…PKTYSLQIAW (297 aa)). The N-linked (GlcNAc...) asparagine glycan is linked to Asn-67. The span at 95 to 128 (DHDHHSDHEHHSDHERHSDHEHHSEHEHHSDHDH) shows a compositional bias: basic and acidic residues. 2 disordered regions span residues 95 to 186 (DHDH…SASE) and 202 to 246 (LETI…SVSE). Positions 129–144 (HSHHNHAASGKNKRKA) are enriched in basic residues. 2 stretches are compositionally biased toward basic and acidic residues: residues 145–159 (LCPD…KDPR) and 167–179 (HRPE…RNVK). Residues 219–234 (SSSTPPSVTSKSRVSR) show a composition bias toward low complexity. N-linked (GlcNAc...) asparagine glycosylation is found at Asn-241, Asn-266, and Asn-283. A helical transmembrane segment spans residues 326–346 (VGGFIAISIISFLSLLGVILV). The Cytoplasmic segment spans residues 347–355 (PLMNRVFFK). Residues 356-376 (FLLSFLVALAVGTLSGDAFLH) form a helical membrane-spanning segment. The Extracellular portion of the chain corresponds to 377-423 (LLPHSHASHHHSHSHEEPAMEMKRGPLFSHLSSQNIEESAYFDSTWK). Residues 424–444 (GLTALGGLYFMFLVEHVLTLI) traverse the membrane as a helical segment. The Cytoplasmic portion of the chain corresponds to 445 to 657 (KQFKDKKKKN…LKAGMTVKQA (213 aa)). Residues 464 to 480 (VEIKKQLSKYESQLSTN) are a coiled coil. A phosphoserine mark is found at Ser-471 and Ser-478. The helical transmembrane segment at 658–678 (VLYNALSAMLAYLGMATGIFI) threads the bilayer. The Extracellular portion of the chain corresponds to 679 to 686 (GHYAENVS). Asn-684 is a glycosylation site (N-linked (GlcNAc...) asparagine). A helical transmembrane segment spans residues 687-707 (MWIFALTAGLFMYVALVDMVP). The Cytoplasmic portion of the chain corresponds to 708–724 (EMLHNDASDHGCSRWGY). Residues 725 to 745 (FFLQNAGMLLGFGIMLLISIF) form a helical membrane-spanning segment. Residues 746 to 755 (EHKIVFRINF) lie on the Extracellular side of the membrane.

This sequence belongs to the ZIP transporter (TC 2.A.5) family. Interacts with SLC39A10; which triggers cells to undergo EMT and mitosis. Found in a complex with SLC39A6, SLC39A10 and with the 'Ser-727' phosphorylated form of STAT3 throughout mitosis. Found in a complex with SLC39A6, SLC39A10 and with NCAM1; this complex controls NCAM1 phosphorylation and integration into focal adhesion complexes during epithelial-to-mesenchymal transition (EMT). Found in a complex with SLC39A6, SLC39A10 and with GSK3B that controls NCAM1 phosphorylation. In terms of processing, cleaved on the N-terminus before locating to the plasma membrane. N-glycosylated. Post-translationally, phosphorylated by ZAP70 in response to TCR stimulation leading to its activation. In terms of tissue distribution, highly expressed in the breast, prostate, placenta, kidney, pituitary and corpus callosum. Weakly expressed in heart and intestine. Also highly expressed in cells derived from an adenocarcinoma of the cervix and lung carcinoma.

Its subcellular location is the cell membrane. It is found in the cell projection. The protein localises to the lamellipodium membrane. The protein resides in the membrane raft. It localises to the apical cell membrane. The enzyme catalyses Zn(2+)(in) = Zn(2+)(out). In terms of biological role, zinc-influx transporter which plays a role in zinc homeostasis and in the induction of epithelial-to-mesenchymal transition (EMT). When associated with SLC39A10, the heterodimer formed by SLC39A10 and SLC39A6 mediates cellular zinc uptake to trigger cells to undergo epithelial- to-mesenchymal transition (EMT). The SLC39A10-SLC39A6 heterodimer also controls NCAM1 phosphorylation and its integration into focal adhesion complexes during EMT. Zinc influx inactivates GSK3B, enabling unphosphorylated SNAI1 in the nucleus to down-regulate adherence genes such as CDH1, causing loss of cell adherence. In addition, the SLC39A10-SLC39A6 heterodimer plays an essentiel role in initiating mitosis by importing zinc into cells to initiate a pathway resulting in the onset of mitosis. Participates in the T-cell receptor signaling regulation by mediating cellular zinc uptake into activated lymphocytes. Regulates the zinc influx necessary for proper meiotic progression to metaphase II (MII) that allows the oocyte-to-egg transition. This is Zinc transporter ZIP6 from Homo sapiens (Human).